The chain runs to 1106 residues: Solute carrier family 12 member 7 (1106 aa).

The Cytoplasmic portion of the chain corresponds to 1–143 (MVYTALTWQR…PRESKAPCMG (143 aa)). A disordered region spans residues 17-83 (GLVPSHLPQE…SPFIGSAAAD (67 aa)). Ser-74 and Ser-86 each carry phosphoserine. A discontinuously helical membrane pass occupies residues 144-166 (TFIGVYLPCLQNILGVILFLRLT). K(+) contacts are provided by Asn-155 and Ile-156. Residue Val-159 participates in chloride binding. Over 167–173 (WIVGAAG) the chain is Extracellular. A helical membrane pass occupies residues 174–196 (VLESFLVVSMCCTCTMLTAVSMS). The Cytoplasmic portion of the chain corresponds to 197-220 (AIATNGVVPAGGSYYMISRSLGPE). The helical transmembrane segment at 221–249 (FGGAVGLCFYLGTTFAGAMYILGTIEIFL) threads the bilayer. The Extracellular portion of the chain corresponds to 250–273 (TYISPGAAVFQAETPEGEAAALLH). Helical transmembrane passes span 274 to 295 (NMRV…VGVK) and 296 to 324 (YVNK…KTAF). Topologically, residues 325-443 (DPPDIPVCLL…PYVLSDITTY (119 aa)) are extracellular. 3 N-linked (GlcNAc...) asparagine glycosylation sites follow: Asn-336, Asn-355, and Asn-384. Residues 444–464 (FTVLVGIYFPSVTGIMAGSNR) traverse the membrane as a helical segment. Residues Pro-453 and Thr-456 each contribute to the K(+) site. Chloride is bound at residue Pro-453. Chloride contacts are provided by Gly-457 and Ile-458. The Cytoplasmic portion of the chain corresponds to 465-474 (SGDLKDAQKS). The helical transmembrane segment at 475-497 (IPTGTILAIVTTSFIYLSCIVLF) threads the bilayer. The Extracellular segment spans residues 498 to 528 (GACIEGVVLRDKFGEALQGNLVIGMLAWPSP). Residues 529-555 (WVIVIGSFFSTCGAGLQSLTGAPRLLQ) traverse the membrane as a helical segment. Topologically, residues 556–578 (AIARDGIVPFLQVFGHGKANGEP) are cytoplasmic. Helical transmembrane passes span 579–597 (TWAL…LIAS) and 598–622 (LDSV…ACAV). Residue Tyr-613 coordinates chloride. The Cytoplasmic segment spans residues 623 to 636 (QTLLRTPNWRPRFK). Transmembrane regions (helical) follow at residues 637 to 659 (YYHW…ICSW) and 660 to 675 (YYAL…IYKY). Over 676–1106 (IEYRGAEKEW…GGREVITIYS (431 aa)) the chain is Cytoplasmic. Residues 688 to 704 (GIRGLSLNAARYALLRV) form a scissor helix region. The disordered stretch occupies residues 980 to 999 (RNTASHTAASRAQAPPTPDK). Thr-996 and Thr-1003 each carry phosphothreonine.

It belongs to the SLC12A transporter family. K/Cl co-transporter subfamily. In terms of assembly, homodimer; adopts a domain-swap conformation at the scissor helices connecting the transmembrane domain and C-terminal domain. Heterodimer with K-Cl cotransporter SLC12A5. As to expression, widely expressed. Higher levels in heart, kidney and lung (at protein level).

Its subcellular location is the cell membrane. The catalysed reaction is K(+)(in) + chloride(in) = K(+)(out) + chloride(out). With respect to regulation, activated by N-ethylmaleimide (NEM). Inhibited by furosemide, DIDS and bumetanide. The inhibition is much stronger in the presence of 50 mM K(+) in the uptake medium. Inhibited by DIOA. Inhibited by WNK3. Mediates electroneutral potassium-chloride cotransport when activated by cell swelling. May mediate K(+) uptake into Deiters' cells in the cochlea and contribute to K(+) recycling in the inner ear. Important for the survival of cochlear outer and inner hair cells and the maintenance of the organ of Corti. May be required for basolateral Cl(-) extrusion in the kidney and contribute to renal acidification. This Oryctolagus cuniculus (Rabbit) protein is Solute carrier family 12 member 7.